The following is a 140-amino-acid chain: Putative nickel-responsive regulator (140 aa).

Histidine 81, histidine 92, histidine 94, and cysteine 100 together coordinate Ni(2+).

It belongs to the transcriptional regulatory CopG/NikR family. The cofactor is Ni(2+).

In terms of biological role, transcriptional regulator. The polypeptide is Putative nickel-responsive regulator (Methanococcoides burtonii (strain DSM 6242 / NBRC 107633 / OCM 468 / ACE-M)).